A 33-amino-acid polypeptide reads, in one-letter code: AGQQFQYDDSGNTFFYQMAEVFEKEQSIXAAXE.

As to quaternary structure, the ER translocon complex consists of channel-forming core components SEC61A1, SEC61B and SEC61G and different auxiliary components such as SEC62 and SEC63. Pancreas.

Its subcellular location is the endoplasmic reticulum membrane. Its function is as follows. Mediates cotranslational and post-translational transport of certain precursor polypeptides across endoplasmic reticulum (ER). Proposed to play an auxiliary role in recognition of precursors with short and apolar signal peptides. May cooperate with SEC62 and HSPA5/BiP to facilitate targeting of small presecretory proteins into the SEC61 channel-forming translocon complex, triggering channel opening for polypeptide translocation to the ER lumen. Required for efficient PKD1/Polycystin-1 biogenesis and trafficking to the plasma membrane of the primary cilia. In Canis lupus familiaris (Dog), this protein is Translocation protein SEC63 homolog (SEC63).